A 186-amino-acid polypeptide reads, in one-letter code: NADH-quinone oxidoreductase subunit B (186 aa).

[4Fe-4S] cluster-binding residues include Cys44, Cys45, Cys110, and Cys139.

The protein belongs to the complex I 20 kDa subunit family. NDH-1 is composed of 14 different subunits. Subunits NuoB, C, D, E, F, and G constitute the peripheral sector of the complex. Requires [4Fe-4S] cluster as cofactor.

The protein resides in the cell inner membrane. It catalyses the reaction a quinone + NADH + 5 H(+)(in) = a quinol + NAD(+) + 4 H(+)(out). Its function is as follows. NDH-1 shuttles electrons from NADH, via FMN and iron-sulfur (Fe-S) centers, to quinones in the respiratory chain. The immediate electron acceptor for the enzyme in this species is believed to be ubiquinone. Couples the redox reaction to proton translocation (for every two electrons transferred, four hydrogen ions are translocated across the cytoplasmic membrane), and thus conserves the redox energy in a proton gradient. The chain is NADH-quinone oxidoreductase subunit B from Leptospira interrogans serogroup Icterohaemorrhagiae serovar copenhageni (strain Fiocruz L1-130).